A 678-amino-acid polypeptide reads, in one-letter code: ABC transporter F family member 2 (678 aa).

ABC transporter domains follow at residues 84 to 342 (VRLE…EAQY) and 411 to 626 (VTVK…AREL). ATP is bound by residues 116–123 (GVNGAGKT) and 443–450 (GPNGCGKS). The interval 630–678 (AELEEKAPKVKAKSKMSKAEREARKKQKMKAFQASKKKSKSSKNAKRWN) is disordered. Residues 653 to 678 (RKKQKMKAFQASKKKSKSSKNAKRWN) show a composition bias toward basic residues.

This sequence belongs to the ABC transporter superfamily. ABCF family. EF3 (TC 3.A.1.121) subfamily.

The polypeptide is ABC transporter F family member 2 (ABCF2) (Arabidopsis thaliana (Mouse-ear cress)).